The primary structure comprises 175 residues: ATP synthase subunit delta (175 aa).

Belongs to the ATPase delta chain family. In terms of assembly, F-type ATPases have 2 components, F(1) - the catalytic core - and F(0) - the membrane proton channel. F(1) has five subunits: alpha(3), beta(3), gamma(1), delta(1), epsilon(1). F(0) has three main subunits: a(1), b(2) and c(10-14). The alpha and beta chains form an alternating ring which encloses part of the gamma chain. F(1) is attached to F(0) by a central stalk formed by the gamma and epsilon chains, while a peripheral stalk is formed by the delta and b chains.

It localises to the cell inner membrane. In terms of biological role, f(1)F(0) ATP synthase produces ATP from ADP in the presence of a proton or sodium gradient. F-type ATPases consist of two structural domains, F(1) containing the extramembraneous catalytic core and F(0) containing the membrane proton channel, linked together by a central stalk and a peripheral stalk. During catalysis, ATP synthesis in the catalytic domain of F(1) is coupled via a rotary mechanism of the central stalk subunits to proton translocation. This protein is part of the stalk that links CF(0) to CF(1). It either transmits conformational changes from CF(0) to CF(1) or is implicated in proton conduction. The polypeptide is ATP synthase subunit delta (Xanthomonas oryzae pv. oryzae (strain MAFF 311018)).